The primary structure comprises 156 residues: Small ribosomal subunit protein uS7c (156 aa).

The protein belongs to the universal ribosomal protein uS7 family. Part of the 30S ribosomal subunit.

Its subcellular location is the plastid. The protein localises to the chloroplast. Functionally, one of the primary rRNA binding proteins, it binds directly to 16S rRNA where it nucleates assembly of the head domain of the 30S subunit. The chain is Small ribosomal subunit protein uS7c (rps7) from Cyanidium caldarium (Red alga).